A 78-amino-acid polypeptide reads, in one-letter code: DNA-directed RNA polymerase subunit Rpo5 (78 aa).

It belongs to the archaeal Rpo5/eukaryotic RPB5 RNA polymerase subunit family. In terms of assembly, part of the RNA polymerase complex.

The protein localises to the cytoplasm. The enzyme catalyses RNA(n) + a ribonucleoside 5'-triphosphate = RNA(n+1) + diphosphate. In terms of biological role, DNA-dependent RNA polymerase (RNAP) catalyzes the transcription of DNA into RNA using the four ribonucleoside triphosphates as substrates. This chain is DNA-directed RNA polymerase subunit Rpo5, found in Methanocaldococcus jannaschii (strain ATCC 43067 / DSM 2661 / JAL-1 / JCM 10045 / NBRC 100440) (Methanococcus jannaschii).